A 180-amino-acid chain; its full sequence is NADH-quinone oxidoreductase subunit I (180 aa).

2 4Fe-4S ferredoxin-type domains span residues 50-80 and 90-119; these read LTRDPDGEERCVACNLCAVACPVGCISLQKA and EFFRINFSRCIFCGLCEEACPTTAIQLTPD. [4Fe-4S] cluster contacts are provided by Cys-60, Cys-63, Cys-66, Cys-70, Cys-99, Cys-102, Cys-105, and Cys-109.

The protein belongs to the complex I 23 kDa subunit family. In terms of assembly, NDH-1 is composed of 13 different subunits. Subunits NuoA, H, J, K, L, M, N constitute the membrane sector of the complex. The cofactor is [4Fe-4S] cluster.

It is found in the cell inner membrane. It carries out the reaction a quinone + NADH + 5 H(+)(in) = a quinol + NAD(+) + 4 H(+)(out). NDH-1 shuttles electrons from NADH, via FMN and iron-sulfur (Fe-S) centers, to quinones in the respiratory chain. The immediate electron acceptor for the enzyme in this species is believed to be ubiquinone. Couples the redox reaction to proton translocation (for every two electrons transferred, four hydrogen ions are translocated across the cytoplasmic membrane), and thus conserves the redox energy in a proton gradient. The sequence is that of NADH-quinone oxidoreductase subunit I from Salmonella choleraesuis (strain SC-B67).